The primary structure comprises 357 residues: GTPase Obg (357 aa).

One can recognise an Obg domain in the interval 1–159 (MKFVDEAEIQ…RTLKLELKLL (159 aa)). The 184-residue stretch at 160–343 (ADIGMLGFPN…IMKSAMTLFE (184 aa)) folds into the OBG-type G domain. GTP-binding positions include 166–173 (GFPNVGKS), 191–195 (FTTLY), 213–216 (DVPG), 293–296 (NKAD), and 324–326 (SAV). Mg(2+) contacts are provided by serine 173 and threonine 193.

It belongs to the TRAFAC class OBG-HflX-like GTPase superfamily. OBG GTPase family. In terms of assembly, monomer. It depends on Mg(2+) as a cofactor.

The protein localises to the cytoplasm. An essential GTPase which binds GTP, GDP and possibly (p)ppGpp with moderate affinity, with high nucleotide exchange rates and a fairly low GTP hydrolysis rate. Plays a role in control of the cell cycle, stress response, ribosome biogenesis and in those bacteria that undergo differentiation, in morphogenesis control. The polypeptide is GTPase Obg (Xylella fastidiosa (strain 9a5c)).